Reading from the N-terminus, the 412-residue chain is MNDLIIQNIKELILPKSTERPLKGKELGELNITENGTVVVKNGKIVYAGEHSDAYEATETIDATDKVVSPALVEAHTHLVHGGSREHEMSLKRQGVSYLEILEQGGGILSTVEATRKATEEALFKKAEKNLLTMMEHGVLAVESKSGYGLDKENELKQLRVSNRLAEKYNLDMKHTFLGPHAVPKDAESNQDFLQEMIDLLPEVKAYADFADIFCETGVFTVEESKKYMEAAKALGFDVKIHADEIDPLGGLELAIDENAISADHLVASSTEGKEKLKNSDTVAVLLPGTTFYLGKESYADARGMLDNDGAIAIATDFNPGSCVTNNLQLVMSIAALKLKLSPNEIWNAVTVNAAKAIDIDAGTINQGDKANIVIWDAPNHEYIPYHYGINHAEKVIKDGKVLIDNRIKLEQ.

Fe(3+) contacts are provided by His76 and His78. Zn(2+) contacts are provided by His76 and His78. 4-imidazolone-5-propanoate-binding residues include Arg85, Tyr148, and His181. An N-formimidoyl-L-glutamate-binding site is contributed by Tyr148. Residue His242 participates in Fe(3+) binding. His242 contributes to the Zn(2+) binding site. Residue Glu245 coordinates 4-imidazolone-5-propanoate. Asp317 provides a ligand contact to Fe(3+). Position 317 (Asp317) interacts with Zn(2+). N-formimidoyl-L-glutamate is bound by residues Asn319 and Gly321. Ser322 provides a ligand contact to 4-imidazolone-5-propanoate.

This sequence belongs to the metallo-dependent hydrolases superfamily. HutI family. Requires Zn(2+) as cofactor. It depends on Fe(3+) as a cofactor.

It localises to the cytoplasm. It carries out the reaction 4-imidazolone-5-propanoate + H2O = N-formimidoyl-L-glutamate. It participates in amino-acid degradation; L-histidine degradation into L-glutamate; N-formimidoyl-L-glutamate from L-histidine: step 3/3. Catalyzes the hydrolytic cleavage of the carbon-nitrogen bond in imidazolone-5-propanoate to yield N-formimidoyl-L-glutamate. It is the third step in the universal histidine degradation pathway. The polypeptide is Imidazolonepropionase (Staphylococcus saprophyticus subsp. saprophyticus (strain ATCC 15305 / DSM 20229 / NCIMB 8711 / NCTC 7292 / S-41)).